The chain runs to 128 residues: uncharacterized protein (128 aa).

Transmembrane regions (helical) follow at residues F13–V35, I42–G64, and L90–L112.

It is found in the cell membrane. This is an uncharacterized protein from Methanocaldococcus jannaschii (strain ATCC 43067 / DSM 2661 / JAL-1 / JCM 10045 / NBRC 100440) (Methanococcus jannaschii).